The sequence spans 320 residues: Probable L,D-transpeptidase YcfS (320 aa).

The N-terminal stretch at 1 to 23 (MMIKTRFSRWLTFFTFAAAVALA) is a signal peptide. The LysM domain occupies 45–90 (KFHVVENDGGSLEAIAKKYNVGFLALLQANPGVDPYVPRAGSVLTI). The region spanning 102 to 241 (EGIVINIAEL…VTPGTKVNII (140 aa)) is the L,D-TPase catalytic domain. The Proton donor/acceptor role is filled by His-201. Cys-217 functions as the Nucleophile in the catalytic mechanism.

This sequence belongs to the YkuD family. In terms of assembly, interacts with DsbG.

It is found in the periplasm. The protein operates within cell wall biogenesis; peptidoglycan biosynthesis. In terms of biological role, responsible, at least in part, for anchoring of the major outer membrane lipoprotein (Lpp, also known as the Braun lipoprotein) to the peptidoglycan via a meso-diaminopimelyl-L-Lys- bond on the terminal residue of Lpp. The protein is Probable L,D-transpeptidase YcfS (ycfS) of Escherichia coli (strain K12).